The following is a 379-amino-acid chain: Homoserine O-succinyltransferase (379 aa).

The 310-residue stretch at Asn-48–Met-357 folds into the AB hydrolase-1 domain. The Nucleophile role is filled by Ser-154. Substrate is bound at residue Arg-224. Residues Asp-319 and His-352 contribute to the active site. Asp-353 lines the substrate pocket.

This sequence belongs to the AB hydrolase superfamily. MetX family. Homodimer.

It localises to the cytoplasm. It catalyses the reaction L-homoserine + succinyl-CoA = O-succinyl-L-homoserine + CoA. It participates in amino-acid biosynthesis; L-methionine biosynthesis via de novo pathway; O-succinyl-L-homoserine from L-homoserine: step 1/1. Functionally, transfers a succinyl group from succinyl-CoA to L-homoserine, forming succinyl-L-homoserine. This Neisseria meningitidis serogroup B (strain ATCC BAA-335 / MC58) protein is Homoserine O-succinyltransferase.